The primary structure comprises 361 residues: NAD(P)H-quinone oxidoreductase subunit 1, chloroplastic (361 aa).

The next 6 membrane-spanning stretches (helical) occupy residues 25–45 (IWLL…VLVI), 102–122 (VAVV…HLVL), 125–145 (LSIG…GLLM), 246–266 (YSGI…LVSS), 298–318 (VFGT…FLFI), and 334–354 (LLNL…LLTT).

It belongs to the complex I subunit 1 family. As to quaternary structure, NDH is composed of at least 16 different subunits, 5 of which are encoded in the nucleus.

The protein resides in the plastid. It is found in the chloroplast thylakoid membrane. It catalyses the reaction a plastoquinone + NADH + (n+1) H(+)(in) = a plastoquinol + NAD(+) + n H(+)(out). The catalysed reaction is a plastoquinone + NADPH + (n+1) H(+)(in) = a plastoquinol + NADP(+) + n H(+)(out). Its function is as follows. NDH shuttles electrons from NAD(P)H:plastoquinone, via FMN and iron-sulfur (Fe-S) centers, to quinones in the photosynthetic chain and possibly in a chloroplast respiratory chain. The immediate electron acceptor for the enzyme in this species is believed to be plastoquinone. Couples the redox reaction to proton translocation, and thus conserves the redox energy in a proton gradient. In Nymphaea alba (White water-lily), this protein is NAD(P)H-quinone oxidoreductase subunit 1, chloroplastic.